A 510-amino-acid chain; its full sequence is 2,3-bisphosphoglycerate-independent phosphoglycerate mutase (510 aa).

Mn(2+) is bound by residues Asp-14 and Ser-64. Ser-64 functions as the Phosphoserine intermediate in the catalytic mechanism. Residues His-125, 155–156 (RD), Arg-187, Arg-193, 259–262 (RADR), and Lys-332 contribute to the substrate site. Residues Asp-399, His-403, Asp-440, His-441, and His-459 each contribute to the Mn(2+) site.

It belongs to the BPG-independent phosphoglycerate mutase family. As to quaternary structure, monomer. The cofactor is Mn(2+).

The catalysed reaction is (2R)-2-phosphoglycerate = (2R)-3-phosphoglycerate. The protein operates within carbohydrate degradation; glycolysis; pyruvate from D-glyceraldehyde 3-phosphate: step 3/5. In terms of biological role, catalyzes the interconversion of 2-phosphoglycerate and 3-phosphoglycerate. This Ectopseudomonas mendocina (strain ymp) (Pseudomonas mendocina) protein is 2,3-bisphosphoglycerate-independent phosphoglycerate mutase.